We begin with the raw amino-acid sequence, 496 residues long: Cytochrome P450 3A30 (496 aa).

Cys-441 is a binding site for heme.

It belongs to the cytochrome P450 family. Requires heme as cofactor. In terms of tissue distribution, highly expressed in liver and intestine. Moderate expression in gill and spleen. Low expression in kidney, brain and heart.

It is found in the endoplasmic reticulum membrane. It localises to the microsome membrane. It carries out the reaction an organic molecule + reduced [NADPH--hemoprotein reductase] + O2 = an alcohol + oxidized [NADPH--hemoprotein reductase] + H2O + H(+). Functionally, putative steroid 6-beta-hydroxylase. The polypeptide is Cytochrome P450 3A30 (cyp3a30) (Fundulus heteroclitus (Killifish)).